Reading from the N-terminus, the 77-residue chain is Antitoxin VapB2 (77 aa).

A SpoVT-AbrB domain is found at Ala4 to Gln46.

This sequence belongs to the VapB family. As to quaternary structure, probably forms a complex with cognate toxin VapC2.

In terms of biological role, antitoxin component of a type II toxin-antitoxin (TA) system. Neutralizes the effect of cognate toxin VapC2 but not non-cognate toxin VapC2. This Haemophilus influenzae (strain 86-028NP) protein is Antitoxin VapB2.